The sequence spans 232 residues: Leucyl/phenylalanyl-tRNA--protein transferase (232 aa).

This sequence belongs to the L/F-transferase family.

It localises to the cytoplasm. The enzyme catalyses N-terminal L-lysyl-[protein] + L-leucyl-tRNA(Leu) = N-terminal L-leucyl-L-lysyl-[protein] + tRNA(Leu) + H(+). The catalysed reaction is N-terminal L-arginyl-[protein] + L-leucyl-tRNA(Leu) = N-terminal L-leucyl-L-arginyl-[protein] + tRNA(Leu) + H(+). It catalyses the reaction L-phenylalanyl-tRNA(Phe) + an N-terminal L-alpha-aminoacyl-[protein] = an N-terminal L-phenylalanyl-L-alpha-aminoacyl-[protein] + tRNA(Phe). Its function is as follows. Functions in the N-end rule pathway of protein degradation where it conjugates Leu, Phe and, less efficiently, Met from aminoacyl-tRNAs to the N-termini of proteins containing an N-terminal arginine or lysine. The polypeptide is Leucyl/phenylalanyl-tRNA--protein transferase (Nitrosospira multiformis (strain ATCC 25196 / NCIMB 11849 / C 71)).